The primary structure comprises 389 residues: Mannitol-1-phosphate 5-dehydrogenase (389 aa).

5 to 16 is a binding site for NAD(+); the sequence is AIQFGGGNIGRG. K214 is a catalytic residue.

This sequence belongs to the mannitol dehydrogenase family. In terms of assembly, monomer.

The catalysed reaction is D-mannitol 1-phosphate + NAD(+) = beta-D-fructose 6-phosphate + NADH + H(+). Catalyzes the NAD(H)-dependent interconversion of D-fructose 6-phosphate and D-mannitol 1-phosphate in the mannitol metabolic pathway. This Talaromyces marneffei (strain ATCC 18224 / CBS 334.59 / QM 7333) (Penicillium marneffei) protein is Mannitol-1-phosphate 5-dehydrogenase.